We begin with the raw amino-acid sequence, 417 residues long: Gap junction alpha-3 protein (417 aa).

An intramembrane segment occupies 2 to 15 (GDWSFLGRLLENAQ). Residues 16-19 (EHST) lie on the Cytoplasmic side of the membrane. Residues 20 to 40 (VIGKVWLTVLFIFRILVLGAA) traverse the membrane as a helical segment. Over 41–71 (AEEVWGDEQSDFTCNTQQPGCENVCYDRAFP) the chain is Extracellular. Cystine bridges form between Cys-54–Cys-198, Cys-61–Cys-192, and Cys-65–Cys-187. A helical transmembrane segment spans residues 72-92 (ISHIRFWALQIIFVSTPTLIY). Residues 93–158 (LGHVLHIVRM…GALLRTYVFN (66 aa)) lie on the Cytoplasmic side of the membrane. The segment covering 110–128 (EEELLRRDNPQHGRGREPM) has biased composition (basic and acidic residues). The tract at residues 110-141 (EEELLRRDNPQHGRGREPMRTGSPRDPPLRDD) is disordered. The chain crosses the membrane as a helical span at residues 159–179 (IIFKTLFEVGFIAGQYFLYGF). Topologically, residues 180–207 (QLQPLYRCDRWPCPNTVDCFISRPTEKT) are extracellular. A helical membrane pass occupies residues 208–228 (IFVIFMLAVACASLVLNMLEI). Over 229–417 (YHLGWKKLKQ…GRARPGDLAI (189 aa)) the chain is Cytoplasmic. Disordered stretches follow at residues 247–267 (DASE…SSGP) and 334–417 (RQVA…DLAI). Residues 342-353 (PASKPSSAASSP) show a composition bias toward low complexity.

It belongs to the connexin family. Alpha-type (group II) subfamily. As to quaternary structure, a hemichannel or connexon is composed of a hexamer of connexins. A functional gap junction is formed by the apposition of two hemichannels. Forms heteromeric channels with GJA8.

The protein localises to the cell membrane. It localises to the cell junction. It is found in the gap junction. Its function is as follows. Structural component of lens fiber gap junctions. Gap junctions are dodecameric channels that connect the cytoplasm of adjoining cells. They are formed by the docking of two hexameric hemichannels, one from each cell membrane. Small molecules and ions diffuse from one cell to a neighboring cell via the central pore. In Mus musculus (Mouse), this protein is Gap junction alpha-3 protein (Gja3).